We begin with the raw amino-acid sequence, 441 residues long: Ribosomal protein uS12 methylthiotransferase RimO (441 aa).

The region spanning 8–118 is the MTTase N-terminal domain; sequence PKIGFVSLGC…VLQHVHHYVP (111 aa). Positions 17, 53, 82, 150, 154, and 157 each coordinate [4Fe-4S] cluster. The 238-residue stretch at 136-373 folds into the Radical SAM core domain; the sequence is LTPRHYAYLK…MQLQQQISAE (238 aa). Residues 376 to 441 form the TRAM domain; sequence QEKVGREILV…DEYDLWGSRV (66 aa).

The protein belongs to the methylthiotransferase family. RimO subfamily. Requires [4Fe-4S] cluster as cofactor.

It is found in the cytoplasm. The enzyme catalyses L-aspartate(89)-[ribosomal protein uS12]-hydrogen + (sulfur carrier)-SH + AH2 + 2 S-adenosyl-L-methionine = 3-methylsulfanyl-L-aspartate(89)-[ribosomal protein uS12]-hydrogen + (sulfur carrier)-H + 5'-deoxyadenosine + L-methionine + A + S-adenosyl-L-homocysteine + 2 H(+). In terms of biological role, catalyzes the methylthiolation of an aspartic acid residue of ribosomal protein uS12. The polypeptide is Ribosomal protein uS12 methylthiotransferase RimO (Salmonella paratyphi A (strain ATCC 9150 / SARB42)).